Reading from the N-terminus, the 356-residue chain is Inositol monophosphatase 3 (356 aa).

Residues 11–31 (LGIGVFCLLGLGVLYHVYSGF) traverse the membrane as a helical segment. Glu-127, Asp-167, Leu-169, Asp-170, and Asp-293 together coordinate Mg(2+). Residue Glu-127 coordinates substrate. Residues 169-172 (LDAT) and Asp-293 each bind substrate.

Belongs to the inositol monophosphatase superfamily. It depends on Mg(2+) as a cofactor.

The protein localises to the membrane. It catalyses the reaction a myo-inositol phosphate + H2O = myo-inositol + phosphate. It participates in polyol metabolism; myo-inositol biosynthesis; myo-inositol from D-glucose 6-phosphate: step 2/2. The sequence is that of Inositol monophosphatase 3 (bpnt2) from Xenopus tropicalis (Western clawed frog).